The chain runs to 46 residues: Phospholipase A2 superbin c (46 aa).

Tyrosine 28, glycine 30, and glycine 32 together coordinate Ca(2+). An intrachain disulfide couples cysteine 29 to cysteine 45.

It depends on Ca(2+) as a cofactor. In terms of tissue distribution, expressed by the venom gland.

The protein resides in the secreted. The enzyme catalyses a 1,2-diacyl-sn-glycero-3-phosphocholine + H2O = a 1-acyl-sn-glycero-3-phosphocholine + a fatty acid + H(+). Functionally, snake venom phospholipase A2 (PLA2) that inhibits collagen-induced platelet aggregation. In terms of inhibition of platelet aggregation, superbin c is more potent as superbin d. PLA2 catalyzes the calcium-dependent hydrolysis of the 2-acyl groups in 3-sn-phosphoglycerides. The protein is Phospholipase A2 superbin c of Austrelaps superbus (Lowland copperhead snake).